A 1172-amino-acid polypeptide reads, in one-letter code: Protein diaphanous homolog 3 (1172 aa).

Positions 1 to 15 are enriched in basic and acidic residues; that stretch reads MEKHRARALGRDSKA. Residues 1 to 36 are disordered; that stretch reads MEKHRARALGRDSKASRRKGLPSAPPAGPYELGEKR. The Nuclear localization signal signature appears at 16–39; the sequence is SRRKGLPSAPPAGPYELGEKRPKL. Phosphothreonine is present on Thr-47. Ser-56 is modified (phosphoserine). The segment at 57-96 is disordered; sequence IRIPKGSKKERPPLPQLKTVSGSSDYSSVSSETMENNPKS. A compositionally biased stretch (low complexity) spans 77–87; that stretch reads SGSSDYSSVSS. Positions 94-456 constitute a GBD/FH3 domain; that stretch reads PKSLSENEVL…QIVLHRDGID (363 aa). Ser-155 carries the phosphoserine modification. Positions 493 to 530 form a coiled coil; that stretch reads CKKFEKECTDHQETQAQLQKKEAKINELQAELQAFKSQ. A disordered region spans residues 535–586; that stretch reads PPGTKIPLQTSAKGEPGPSAFPPAPPALGAGVPPPPPPPPPPPPPLPGMAMP. An FH1 domain is found at 541–611; sequence PLQTSAKGEP…GQNFIPLNLP (71 aa). Residues 553–581 show a composition bias toward pro residues; that stretch reads SAFPPAPPALGAGVPPPPPPPPPPPPPLP. The FH2 domain maps to 616–1014; that stretch reads PKKEFKPEIS…EKRARIAKER (399 aa). The DAD domain maps to 1037-1067; that stretch reads DETGVMDSLLEALQSGAAFRDRRKRTPKLKD. Ser-1073 and Ser-1158 each carry phosphoserine. Residues 1163–1172 carry the Nuclear export signal motif; it reads EALLARLRAL.

Belongs to the formin homology family. Diaphanous subfamily. In terms of processing, ubiquitinated. In terms of tissue distribution, expressed in testis. Present in Sertoli cells (at protein level).

Its subcellular location is the cytoplasm. It is found in the nucleus. Its function is as follows. Actin nucleation and elongation factor required for the assembly of F-actin structures, such as actin cables and stress fibers. Required for cytokinesis, stress fiber formation and transcriptional activation of the serum response factor. Binds to GTP-bound form of Rho and to profilin: acts in a Rho-dependent manner to recruit profilin to the membrane, where it promotes actin polymerization. DFR proteins couple Rho and Src tyrosine kinase during signaling and the regulation of actin dynamics. Also acts as an actin nucleation and elongation factor in the nucleus by promoting nuclear actin polymerization inside the nucleus to drive serum-dependent SRF-MRTFA activity. This chain is Protein diaphanous homolog 3, found in Rattus norvegicus (Rat).